A 450-amino-acid chain; its full sequence is uncharacterized protein (450 aa).

The TRAM domain maps to 1-58 (MQKNQIVDLEITDLSYEAMGVAHLDGMTVFVNNALPGEIVSAKLLKVKKNFAFAKIEK). Gln-280, Tyr-309, Glu-330, and Asp-378 together coordinate S-adenosyl-L-methionine. The active-site Nucleophile is the Cys-405.

The protein belongs to the class I-like SAM-binding methyltransferase superfamily. RNA M5U methyltransferase family.

This is an uncharacterized protein from Lactobacillus johnsonii (strain CNCM I-12250 / La1 / NCC 533).